Consider the following 322-residue polypeptide: Transmembrane and ubiquitin-like domain-containing protein 2 (322 aa).

Residues 38–58 (VVAGVVVLILALVLAWLSTYV) form a helical membrane-spanning segment. Residues 88–168 (VAGQGTPEPT…VRSEDSTCLP (81 aa)) form a disordered region. Residues 115–130 (EGGGDPTGEPGAGGGV) are compositionally biased toward gly residues. In terms of domain architecture, Ubiquitin-like spans 174 to 247 (ISVRLKFFND…IHCHRSPPGS (74 aa)). The next 2 membrane-spanning stretches (helical) occupy residues 267-287 (LGVSVGSLMVPVFVVLLGVVW) and 296-316 (FFTAPATVSLVGVTVFFSFLV).

It localises to the membrane. This Bos taurus (Bovine) protein is Transmembrane and ubiquitin-like domain-containing protein 2 (TMUB2).